A 421-amino-acid chain; its full sequence is Probable acid phosphatase (421 aa).

Asp229 functions as the Proton donor in the catalytic mechanism.

The enzyme catalyses a phosphate monoester + H2O = an alcohol + phosphate. In Kluyveromyces lactis (strain ATCC 8585 / CBS 2359 / DSM 70799 / NBRC 1267 / NRRL Y-1140 / WM37) (Yeast), this protein is Probable acid phosphatase.